The sequence spans 44 residues: Keratin-associated protein 20-3 (44 aa).

It belongs to the KRTAP type 20 family. As to quaternary structure, interacts with hair keratins.

In the hair cortex, hair keratin intermediate filaments are embedded in an interfilamentous matrix, consisting of hair keratin-associated proteins (KRTAP), which are essential for the formation of a rigid and resistant hair shaft through their extensive disulfide bond cross-linking with abundant cysteine residues of hair keratins. The matrix proteins include the high-sulfur and high-glycine-tyrosine keratins. In Homo sapiens (Human), this protein is Keratin-associated protein 20-3 (KRTAP20-3).